Reading from the N-terminus, the 225-residue chain is Small ribosomal subunit protein uS3 (225 aa).

The region spanning 39 to 109 (IYRFFNKFTR…ELKLNIEVVN (71 aa)) is the KH type-2 domain.

The protein belongs to the universal ribosomal protein uS3 family. As to quaternary structure, part of the 30S ribosomal subunit. Forms a tight complex with proteins S10 and S14.

Functionally, binds the lower part of the 30S subunit head. Binds mRNA in the 70S ribosome, positioning it for translation. The protein is Small ribosomal subunit protein uS3 of Mycoplasma mobile (strain ATCC 43663 / 163K / NCTC 11711) (Mesomycoplasma mobile).